The primary structure comprises 548 residues: Rhodopsin kinase grk7-b (548 aa).

Phosphoserine; by PKA is present on Ser-33. Residues 53–172 (FEDICEQQPI…QTSLFFDRFV (120 aa)) enclose the RGS domain. Residues 187 to 446 (FYEFRTLGKG…NDDPRKHEFF (260 aa)) form the Protein kinase domain. ATP-binding positions include 193 to 201 (LGKGGFGEV) and Lys-216. Asp-312 (proton acceptor) is an active-site residue. An AGC-kinase C-terminal domain is found at 447–512 (KSINFPRLEA…GVVPIAWQQE (66 aa)). The disordered stretch occupies residues 520 to 548 (DELSDPNRKESAAGLEDEEQQKSKSCTLL). Residue Cys-545 is modified to Cysteine methyl ester. Cys-545 carries S-geranylgeranyl cysteine lipidation. A propeptide spans 546-548 (TLL) (removed in mature form).

Belongs to the protein kinase superfamily. AGC Ser/Thr protein kinase family. GPRK subfamily. In terms of processing, phosphorylation at Ser-33 is regulated by light and activated by cAMP. As to expression, expressed in the eyes (at protein level). Expressed in the eyes, the pineal gland and in the brain.

It localises to the membrane. It catalyses the reaction L-threonyl-[rhodopsin] + ATP = O-phospho-L-threonyl-[rhodopsin] + ADP + H(+). It carries out the reaction L-seryl-[rhodopsin] + ATP = O-phospho-L-seryl-[rhodopsin] + ADP + H(+). Retina-specific kinase involved in the shutoff of the photoresponse and adaptation to changing light conditions via cone opsin phosphorylation, including rhodopsin (RHO). The protein is Rhodopsin kinase grk7-b (grk7b) of Danio rerio (Zebrafish).